The chain runs to 298 residues: 4-hydroxy-tetrahydrodipicolinate synthase (298 aa).

Thr48 is a pyruvate binding site. Tyr137 acts as the Proton donor/acceptor in catalysis. Lys166 serves as the catalytic Schiff-base intermediate with substrate. Residue Ile207 coordinates pyruvate.

This sequence belongs to the DapA family. Homotetramer; dimer of dimers.

The protein localises to the cytoplasm. The catalysed reaction is L-aspartate 4-semialdehyde + pyruvate = (2S,4S)-4-hydroxy-2,3,4,5-tetrahydrodipicolinate + H2O + H(+). The protein operates within amino-acid biosynthesis; L-lysine biosynthesis via DAP pathway; (S)-tetrahydrodipicolinate from L-aspartate: step 3/4. Functionally, catalyzes the condensation of (S)-aspartate-beta-semialdehyde [(S)-ASA] and pyruvate to 4-hydroxy-tetrahydrodipicolinate (HTPA). In Campylobacter jejuni subsp. jejuni serotype O:2 (strain ATCC 700819 / NCTC 11168), this protein is 4-hydroxy-tetrahydrodipicolinate synthase.